Here is a 351-residue protein sequence, read N- to C-terminus: O-methyltransferase apf6 (351 aa).

Residues 231-232, 279-280, and Arg295 contribute to the S-adenosyl-L-methionine site; these read GG and NF. His299 functions as the Proton acceptor in the catalytic mechanism.

It belongs to the class I-like SAM-binding methyltransferase superfamily. Cation-independent O-methyltransferase family.

The protein operates within secondary metabolite biosynthesis. In terms of biological role, O-methyltransferase; part of the gene cluster that mediates the biosynthesis of the cyclic tetrapeptide apicidin F (APF). The non-ribosomal peptide synthetase apf1 incorporates four different amino acids to produce apicidin F: L-phenylalanine, D-pipecolic acid (D-pip), N-methoxy-L-tryptophan and L-2-aminooctanedioic acid. L-Phenylalanine is the only proteinogenic amino acid directly used by apf1. The 3 other apf1 substrates are non-proteinogenic and have to be modified by other enzymes of the cluster. Lysine is converted to delta-1-pyrroline-5-carboxylate (P5C) which is reduced to L-pipecolic acid (L-pip) by apf3. L-pip is epimerized to D-pip, probably by apf1 activity, prior to incorporation. L-Tryptophan is N-oxidyzed by one of the cytochrome P450 monooxygenases (apf7 or apf8), and further methylated at the hydroxy group by the O-methyltransferase apf6 to yield N-methoxy-L-tryptophan. The synthesis of the fourth apf1 substrate is more complex. The fatty acid synthase apf5 is involved in the synthesis of the octanoic acid backbone of L-2-aminooctanedioic acid by fixing one acetyl-CoA unit and three malonyl-CoA units. Then one of the cytochrome P450 monooxygenases (apf7 or apf8) may oxidize this backbone to 2-oxooctanoic acid. The aminotransferase apf4 is predicted to catalyze the exchange of the keto group with an amino group. The next step would be the oxidation of 2-aminooctanoic acid by one of the cytochrome P450 monooxygenases (apf7 or apf8). The last step is the oxidation of 2-amino-8-hydroxyoctanoic acid to 2-aminooctanedioic acid is catalyzed by the FAD-dependent monooxygenase apf9. This is O-methyltransferase apf6 from Gibberella fujikuroi (strain CBS 195.34 / IMI 58289 / NRRL A-6831) (Bakanae and foot rot disease fungus).